Consider the following 288-residue polypeptide: Bifunctional protein FolD 2 (288 aa).

NADP(+) contacts are provided by residues 166–168 (GRS) and Ser-191.

The protein belongs to the tetrahydrofolate dehydrogenase/cyclohydrolase family. Homodimer.

It carries out the reaction (6R)-5,10-methylene-5,6,7,8-tetrahydrofolate + NADP(+) = (6R)-5,10-methenyltetrahydrofolate + NADPH. The enzyme catalyses (6R)-5,10-methenyltetrahydrofolate + H2O = (6R)-10-formyltetrahydrofolate + H(+). The protein operates within one-carbon metabolism; tetrahydrofolate interconversion. Its function is as follows. Catalyzes the oxidation of 5,10-methylenetetrahydrofolate to 5,10-methenyltetrahydrofolate and then the hydrolysis of 5,10-methenyltetrahydrofolate to 10-formyltetrahydrofolate. The polypeptide is Bifunctional protein FolD 2 (Myxococcus xanthus (strain DK1622)).